A 337-amino-acid polypeptide reads, in one-letter code: Basic membrane protein A2 (337 aa).

The N-terminal stretch at Met1–Ser17 is a signal peptide. Cys18 is lipidated: N-palmitoyl cysteine. Cys18 carries S-diacylglycerol cysteine lipidation.

This sequence belongs to the BMP lipoprotein family. In terms of assembly, monomer.

The protein resides in the cell inner membrane. Its function is as follows. Immunogenic protein. May be part of an ABC-type nucleoside uptake system involved in the purine salvage pathway. This chain is Basic membrane protein A2 (bmpA2), found in Borrelia garinii subsp. bavariensis (strain ATCC BAA-2496 / DSM 23469 / PBi) (Borreliella bavariensis).